A 73-amino-acid chain; its full sequence is Neutrophil elastase 2B (73 aa).

One can recognise a Peptidase S1 domain in the interval 1 to 73 (IVGGRPARPH…SGGPLVCNGL (73 aa)). Residue Ser-64 is the Charge relay system of the active site.

It belongs to the peptidase S1 family. Elastase subfamily.

Functionally, may be involved in the degradation of connective tissue in chronic lung disease. The polypeptide is Neutrophil elastase 2B (Equus caballus (Horse)).